The sequence spans 335 residues: ATP-dependent 6-phosphofructokinase (335 aa).

Residue glycine 11 coordinates ATP. An ADP-binding site is contributed by 21-25; the sequence is RAVVR. ATP contacts are provided by residues 72 to 73 and 102 to 105; these read RY and GDGS. Residue aspartate 103 coordinates Mg(2+). Position 125–127 (125–127) interacts with substrate; that stretch reads TID. Aspartate 127 functions as the Proton acceptor in the catalytic mechanism. ADP is bound at residue arginine 154. Residues arginine 162 and 169–171 contribute to the substrate site; that span reads MGR. Residues 185-187 and 213-215 each bind ADP; these read GAD and KKH. Substrate is bound by residues glutamate 222, arginine 244, and 250–253; that span reads HIQR.

It belongs to the phosphofructokinase type A (PFKA) family. ATP-dependent PFK group I subfamily. Prokaryotic clade 'B1' sub-subfamily. As to quaternary structure, homotetramer. It depends on Mg(2+) as a cofactor.

It localises to the cytoplasm. The catalysed reaction is beta-D-fructose 6-phosphate + ATP = beta-D-fructose 1,6-bisphosphate + ADP + H(+). The protein operates within carbohydrate degradation; glycolysis; D-glyceraldehyde 3-phosphate and glycerone phosphate from D-glucose: step 3/4. Allosterically activated by ADP and other diphosphonucleosides, and allosterically inhibited by phosphoenolpyruvate. Functionally, catalyzes the phosphorylation of D-fructose 6-phosphate to fructose 1,6-bisphosphate by ATP, the first committing step of glycolysis. The sequence is that of ATP-dependent 6-phosphofructokinase from Streptococcus pneumoniae (strain CGSP14).